The chain runs to 393 residues: (S)-mandelate dehydrogenase (393 aa).

Residues 1–377 (MSQNLFNVED…SPDYLQNEGV (377 aa)) enclose the FMN hydroxy acid dehydrogenase domain. Y26 contacts (S)-mandelate. Residues 79–81 (PTG), S108, and Q129 contribute to the FMN site. Y131 contributes to the (S)-mandelate binding site. Position 156 (T156) interacts with FMN. R165 lines the (S)-mandelate pocket. K250 contributes to the FMN binding site. (S)-mandelate contacts are provided by H274 and R277. H274 (proton acceptor) is an active-site residue. FMN-binding positions include 303 to 307 (DSGFR) and 326 to 327 (GR).

It belongs to the FMN-dependent alpha-hydroxy acid dehydrogenase family. In terms of assembly, homotetramer. FMN is required as a cofactor.

The protein localises to the cell inner membrane. It catalyses the reaction (S)-mandelate + A = phenylglyoxylate + AH2. The protein operates within aromatic compound metabolism; (R)-mandelate degradation; benzoate from (R)-mandelate: step 2/4. Its function is as follows. Catalyzes the dehydrogenation of (S)-mandelate to phenylglyoxylate (benzoylformate). Is likely involved in the utilization of mandelate as a sole source of carbon and energy for growth. Active in vitro with the artificial electron acceptors 2,6-dichlorophenolindophenol (DCPIP) or ferricyanide, but in vivo most likely transfer the electron pair from the reduced flavin to a component of the electron transport chain in the membrane, possibly a quinone. Shows very low activity with oxygen as the electron acceptor, and also with 3-indolelactate and medium chain 2-hydroxyacids as substrates. The protein is (S)-mandelate dehydrogenase of Pseudomonas putida (Arthrobacter siderocapsulatus).